The chain runs to 515 residues: Hopanoid C-3 methylase (515 aa).

The B12-binding domain maps to 8–141; it reads PSPLMYTKVF…ETLARRGNID (134 aa). A Radical SAM core domain is found at 181-395; sequence GTLDPCASIE…DIQHAVLPTR (215 aa). The [4Fe-4S] cluster site is built by C195, C199, and C202.

This sequence belongs to the radical SAM superfamily. [4Fe-4S] cluster serves as cofactor.

In terms of biological role, required for methylation of hopanoids at the C-3 position. In Methylococcus capsulatus (strain ATCC 33009 / NCIMB 11132 / Bath), this protein is Hopanoid C-3 methylase.